Reading from the N-terminus, the 822-residue chain is Fibroblast growth factor receptor 4 (822 aa).

The signal sequence occupies residues 1–35; sequence MGVQKDSRDIRWNRTTRPLALLLCGLLAFSALSCA. 3 N-linked (GlcNAc...) asparagine glycosylation sites follow: N13, N72, and N125. Over 36–388 the chain is Extracellular; the sequence is RTLPEGRKAN…AEGPETRYTD (353 aa). 3 Ig-like C2-type domains span residues 39-129, 157-259, and 268-368; these read PEGR…FTIS, PPYS…YLLD, and PILQ…AWLT. C69 and C114 are joined by a disulfide. The segment at 136-166 is disordered; sequence SGDDDDEDHGREDSAGDMGEDPPYSTSYRAP. C191 and C243 are oxidised to a cystine. N-linked (GlcNAc...) asparagine glycosylation is found at N240, N277, N309, N330, and N341. C290 and C352 form a disulfide bridge. A helical transmembrane segment spans residues 389 to 409; it reads IIIYTSGSLALLMAAVIVVLC. The Cytoplasmic portion of the chain corresponds to 410 to 822; the sequence is RMQLPPTKTH…HHTTTSMVGT (413 aa). Positions 486 to 774 constitute a Protein kinase domain; it reads LVLGKPLGEG…ILATVAEEYL (289 aa). Residues 492 to 500 and K522 each bind ATP; that span reads LGEGCFGQV. D631 serves as the catalytic Proton acceptor. Residues Y661, Y662, and Y773 each carry the phosphotyrosine; by autocatalysis modification.

It belongs to the protein kinase superfamily. Tyr protein kinase family. Fibroblast growth factor receptor subfamily. Ubiquitinated. Subject to proteasomal degradation when not fully glycosylated. Post-translationally, autophosphorylated. Binding of FGF family members together with heparan sulfate proteoglycan or heparin promotes receptor dimerization and autophosphorylation on tyrosine residues. Autophosphorylation occurs in trans between the two FGFR molecules present in the dimer.

The protein resides in the cell membrane. It localises to the endosome. Its subcellular location is the endoplasmic reticulum. It carries out the reaction L-tyrosyl-[protein] + ATP = O-phospho-L-tyrosyl-[protein] + ADP + H(+). Present in an inactive conformation in the absence of bound ligand. Ligand binding leads to dimerization and activation by autophosphorylation on tyrosine residues. In terms of biological role, tyrosine-protein kinase that acts as a cell-surface receptor for fibroblast growth factors and plays a role in the regulation of cell proliferation, differentiation and migration, and in regulation of lipid metabolism, bile acid biosynthesis, glucose uptake, vitamin D metabolism and phosphate homeostasis. Required for normal down-regulation of the expression of CYP7A1, the rate-limiting enzyme in bile acid synthesis, in response to FGF19. Phosphorylates PLCG1 and FRS2. Ligand binding leads to the activation of several signaling cascades. Activation of PLCG1 leads to the production of the cellular signaling molecules diacylglycerol and inositol 1,4,5-trisphosphate. Phosphorylation of FRS2 triggers recruitment of GRB2, GAB1, PIK3R1 and SOS1, and mediates activation of RAS, MAPK1/ERK2, MAPK3/ERK1 and the MAP kinase signaling pathway, as well as of the AKT1 signaling pathway. The sequence is that of Fibroblast growth factor receptor 4 (FGFR4) from Pleurodeles waltl (Iberian ribbed newt).